The primary structure comprises 478 residues: Protein FAM83E (478 aa).

Residues 1–293 (MAASQLAALE…LYAASCPLPP (293 aa)) are DUF1669. 3 disordered regions span residues 292–334 (PPAP…PLAH), 359–436 (RART…LPPA), and 452–478 (DATFKLQEPRGVRPSDWAPRAGLGGQP). Residues 309–319 (RSPHRVSRRRS) show a composition bias toward basic residues. The segment covering 379 to 388 (RLSQLSGSSD) has biased composition (polar residues).

Belongs to the FAM83 family. As to quaternary structure, directly interacts (via DUF1669) with CSNK1A1, CSNK1A1L, CSNK1D and CSNK1E. May interact with RAF1.

The protein resides in the cytoplasm. It is found in the perinuclear region. Its function is as follows. May play a role in MAPK signaling. The sequence is that of Protein FAM83E from Homo sapiens (Human).